The following is a 379-amino-acid chain: Chaperone protein DnaJ 2 (379 aa).

A J domain is found at 4–68 (DYYAVLGVRR…QKKQVYDLGG (65 aa)). The segment at 130–212 (GTTKDIQVDT…CAGDGRVPSR (83 aa)) adopts a CR-type zinc-finger fold. 8 residues coordinate Zn(2+): Cys143, Cys146, Cys160, Cys163, Cys186, Cys189, Cys200, and Cys203. CXXCXGXG motif repeat units lie at residues 143–150 (CNTCNGEG), 160–167 (CDMCRGRG), 186–193 (CPQCQGFA), and 200–207 (CPECAGDG). The disordered stretch occupies residues 351 to 379 (RGEERPTGQFQPGQQGLFSRLKDAFNGRS). Over residues 358 to 367 (GQFQPGQQGL) the composition is skewed to polar residues. Residues 370-379 (RLKDAFNGRS) are compositionally biased toward basic and acidic residues.

The protein belongs to the DnaJ family. As to quaternary structure, homodimer. Requires Zn(2+) as cofactor.

It is found in the cytoplasm. Its function is as follows. Participates actively in the response to hyperosmotic and heat shock by preventing the aggregation of stress-denatured proteins and by disaggregating proteins, also in an autonomous, DnaK-independent fashion. Unfolded proteins bind initially to DnaJ; upon interaction with the DnaJ-bound protein, DnaK hydrolyzes its bound ATP, resulting in the formation of a stable complex. GrpE releases ADP from DnaK; ATP binding to DnaK triggers the release of the substrate protein, thus completing the reaction cycle. Several rounds of ATP-dependent interactions between DnaJ, DnaK and GrpE are required for fully efficient folding. Also involved, together with DnaK and GrpE, in the DNA replication of plasmids through activation of initiation proteins. The sequence is that of Chaperone protein DnaJ 2 from Streptomyces albus G.